The sequence spans 472 residues: Ras-GEF domain-containing family member 1B (472 aa).

The N-terminal Ras-GEF domain maps to 34–164 (HDNNLLSGSL…MMQCLIRKLA (131 aa)). One can recognise a Ras-GEF domain in the interval 204–452 (DPYTLAQQLT…YLASYESEGP (249 aa)).

In terms of assembly, interacts with CCDC124 during cytokinesis. Interacts with Ras family proteins.

Its subcellular location is the early endosome. It localises to the late endosome. The protein localises to the midbody. Functionally, guanine nucleotide exchange factor (GEF) with specificity for RAP2A, it doesn't seems to activate other Ras family proteins (in vitro). This is Ras-GEF domain-containing family member 1B (RASGEF1B) from Pongo abelii (Sumatran orangutan).